The primary structure comprises 349 residues: Dihydroorotate dehydrogenase (quinone) (349 aa).

FMN is bound by residues alanine 67 to lysine 71 and threonine 91. A substrate-binding site is contributed by lysine 71. Residue asparagine 116–phenylalanine 120 coordinates substrate. Positions 147 and 180 each coordinate FMN. Asparagine 180 is a substrate binding site. Serine 183 functions as the Nucleophile in the catalytic mechanism. Substrate is bound at residue asparagine 185. Lysine 225 and threonine 253 together coordinate FMN. A substrate-binding site is contributed by asparagine 254 to threonine 255. FMN contacts are provided by residues glycine 276, glycine 305, and tyrosine 326 to threonine 327.

This sequence belongs to the dihydroorotate dehydrogenase family. Type 2 subfamily. Monomer. Requires FMN as cofactor.

Its subcellular location is the cell membrane. It carries out the reaction (S)-dihydroorotate + a quinone = orotate + a quinol. It participates in pyrimidine metabolism; UMP biosynthesis via de novo pathway; orotate from (S)-dihydroorotate (quinone route): step 1/1. Catalyzes the conversion of dihydroorotate to orotate with quinone as electron acceptor. The protein is Dihydroorotate dehydrogenase (quinone) of Bordetella parapertussis (strain 12822 / ATCC BAA-587 / NCTC 13253).